A 325-amino-acid chain; its full sequence is MKPSIVLYKNIPADLRERLEQHFTVHAFDGLTPDNHDELRQALQQAEGIIGSGGKIDEAFLQQTPKLRAASTISVGYDNFDVDALNAHNVLLMHTPTVLTETVADTIMSLVLATARRVVEVAERVKAGEWQGSIGADWFGVDVHHKTIGILGMGRIGLALAQRAHFGFGMPVLYNARRTHEEAEQRFNARRCDLDTLLAESDFICITLPLTDETFHMISRDQLAKMKKSGILINAGRGPVVDEAALIEALQNGTIHAAGLDVFEKEPLPVSSPLLTLPNVVALPHIGSATHETRYGMAECAVDNLIAALTGTVKENCVNPQLLKK.

Catalysis depends on residues Arg237 and Glu266. His285 (proton donor) is an active-site residue.

It belongs to the D-isomer specific 2-hydroxyacid dehydrogenase family. GhrB subfamily. As to quaternary structure, homodimer.

Its subcellular location is the cytoplasm. The enzyme catalyses glycolate + NADP(+) = glyoxylate + NADPH + H(+). It carries out the reaction (R)-glycerate + NAD(+) = 3-hydroxypyruvate + NADH + H(+). The catalysed reaction is (R)-glycerate + NADP(+) = 3-hydroxypyruvate + NADPH + H(+). Functionally, catalyzes the NADPH-dependent reduction of glyoxylate and hydroxypyruvate into glycolate and glycerate, respectively. This chain is Glyoxylate/hydroxypyruvate reductase B, found in Serratia proteamaculans (strain 568).